The following is a 342-amino-acid chain: S-adenosylmethionine:tRNA ribosyltransferase-isomerase (342 aa).

The protein belongs to the QueA family. As to quaternary structure, monomer.

The protein localises to the cytoplasm. It carries out the reaction 7-aminomethyl-7-carbaguanosine(34) in tRNA + S-adenosyl-L-methionine = epoxyqueuosine(34) in tRNA + adenine + L-methionine + 2 H(+). It participates in tRNA modification; tRNA-queuosine biosynthesis. Functionally, transfers and isomerizes the ribose moiety from AdoMet to the 7-aminomethyl group of 7-deazaguanine (preQ1-tRNA) to give epoxyqueuosine (oQ-tRNA). The polypeptide is S-adenosylmethionine:tRNA ribosyltransferase-isomerase (Bacillus pumilus (strain SAFR-032)).